A 503-amino-acid chain; its full sequence is Maturase K (503 aa).

It belongs to the intron maturase 2 family. MatK subfamily.

The protein resides in the plastid. It is found in the chloroplast. Usually encoded in the trnK tRNA gene intron. Probably assists in splicing its own and other chloroplast group II introns. This chain is Maturase K, found in Kunzea baxteri (Scarlet kunzea).